We begin with the raw amino-acid sequence, 466 residues long: Soluble pyridine nucleotide transhydrogenase (466 aa).

36–45 serves as a coordination point for FAD; the sequence is ERYHNVGGGC.

Belongs to the class-I pyridine nucleotide-disulfide oxidoreductase family. It depends on FAD as a cofactor.

The protein localises to the cytoplasm. The catalysed reaction is NAD(+) + NADPH = NADH + NADP(+). Conversion of NADPH, generated by peripheral catabolic pathways, to NADH, which can enter the respiratory chain for energy generation. The sequence is that of Soluble pyridine nucleotide transhydrogenase from Klebsiella pneumoniae subsp. pneumoniae (strain ATCC 700721 / MGH 78578).